A 156-amino-acid chain; its full sequence is ATP synthase subunit b (156 aa).

The chain crosses the membrane as a helical span at residues leucine 7–proline 27.

The protein belongs to the ATPase B chain family. In terms of assembly, F-type ATPases have 2 components, F(1) - the catalytic core - and F(0) - the membrane proton channel. F(1) has five subunits: alpha(3), beta(3), gamma(1), delta(1), epsilon(1). F(0) has three main subunits: a(1), b(2) and c(10-14). The alpha and beta chains form an alternating ring which encloses part of the gamma chain. F(1) is attached to F(0) by a central stalk formed by the gamma and epsilon chains, while a peripheral stalk is formed by the delta and b chains.

It localises to the cell inner membrane. F(1)F(0) ATP synthase produces ATP from ADP in the presence of a proton or sodium gradient. F-type ATPases consist of two structural domains, F(1) containing the extramembraneous catalytic core and F(0) containing the membrane proton channel, linked together by a central stalk and a peripheral stalk. During catalysis, ATP synthesis in the catalytic domain of F(1) is coupled via a rotary mechanism of the central stalk subunits to proton translocation. In terms of biological role, component of the F(0) channel, it forms part of the peripheral stalk, linking F(1) to F(0). This Neisseria gonorrhoeae (strain NCCP11945) protein is ATP synthase subunit b.